The sequence spans 429 residues: Adenylosuccinate synthetase (429 aa).

GTP-binding positions include 12–18 (GDEGKGK) and 40–42 (GHT). Asp-13 functions as the Proton acceptor in the catalytic mechanism. Asp-13 and Gly-40 together coordinate Mg(2+). IMP contacts are provided by residues 13–16 (DEGK), 38–41 (NAGH), Thr-129, Arg-143, Gln-223, Thr-238, and Arg-302. His-41 serves as the catalytic Proton donor. Substrate is bound at residue 298 to 304 (VVTGRKR). Residues Arg-304, 330–332 (KLD), and 412–414 (STS) contribute to the GTP site.

This sequence belongs to the adenylosuccinate synthetase family. In terms of assembly, homodimer. Mg(2+) is required as a cofactor.

It localises to the cytoplasm. The catalysed reaction is IMP + L-aspartate + GTP = N(6)-(1,2-dicarboxyethyl)-AMP + GDP + phosphate + 2 H(+). Its pathway is purine metabolism; AMP biosynthesis via de novo pathway; AMP from IMP: step 1/2. Plays an important role in the de novo pathway of purine nucleotide biosynthesis. Catalyzes the first committed step in the biosynthesis of AMP from IMP. The chain is Adenylosuccinate synthetase from Maricaulis maris (strain MCS10) (Caulobacter maris).